The chain runs to 118 residues: MISKPDKNKIRQKRHRRVRGKLSGTADRPRLNVFRSNTGIYAQVIDDVAGVTLASASTLDKDVSKGTKTEQAVVVGKLVAERAVAKGISEVVFDRGGYLYHGRVKALADAARENGLKF.

A disordered region spans residues 1–25; it reads MISKPDKNKIRQKRHRRVRGKLSGT. The segment covering 10–20 has biased composition (basic residues); sequence IRQKRHRRVRG.

This sequence belongs to the universal ribosomal protein uL18 family. In terms of assembly, part of the 50S ribosomal subunit; part of the 5S rRNA/L5/L18/L25 subcomplex. Contacts the 5S and 23S rRNAs.

Its function is as follows. This is one of the proteins that bind and probably mediate the attachment of the 5S RNA into the large ribosomal subunit, where it forms part of the central protuberance. The sequence is that of Large ribosomal subunit protein uL18 from Streptococcus pyogenes serotype M5 (strain Manfredo).